A 440-amino-acid polypeptide reads, in one-letter code: MQAYFDQLDRVRYEGSKSSNPLAFHHYNPDELVLGKRMEEHLRFAACYWHTFCWNGADMFGVGAFNRPWQQPGEALALAKRKADVAFEFFHKLHVPFYCFHDVDVSPEGASLKEYINNFAQMVDVLAGKQEESGVKLLWGTANCFTNPRYGAGAATNPDPEVFSWAATQVVTAMEATHKLGGENYVLWGGREGYETLLNTDLRQEREQLGRFMQMVVEHKHKIGFQGTLLIEPKPQEPTKHQYDYDAATVYGFLKQFGLEKEIKLNIEANHATLAGHSFHHEIATAIALGLFGSVDANRGDAQLGWDTDQFPNSVEENALVMYEILKAGGFTTGGLNFDAKVRRQSTDKYDLFYGHIGAMDTMALALKIAARMIEDGELDKRIAQRYSGWNSELGQQILKGQMSLADLAKYAQEHNLSPVHQSGRQEQLENLVNHYLFDK.

Catalysis depends on residues histidine 101 and aspartate 104. Glutamate 232, glutamate 268, histidine 271, aspartate 296, aspartate 307, aspartate 309, and aspartate 339 together coordinate Mg(2+).

Belongs to the xylose isomerase family. In terms of assembly, homotetramer. Mg(2+) serves as cofactor.

The protein localises to the cytoplasm. The catalysed reaction is alpha-D-xylose = alpha-D-xylulofuranose. In Escherichia coli O17:K52:H18 (strain UMN026 / ExPEC), this protein is Xylose isomerase.